Here is a 380-residue protein sequence, read N- to C-terminus: Chaperone protein DnaJ (380 aa).

The 66-residue stretch at D5–G70 folds into the J domain. The CR-type zinc finger occupies G137–E215. Residues C150, C153, C167, C170, C189, C192, C203, and C206 each contribute to the Zn(2+) site. CXXCXGXG motif repeat units lie at residues C150–G157, C167–G174, C189–G196, and C203–G210.

The protein belongs to the DnaJ family. Homodimer. Zn(2+) serves as cofactor.

It is found in the cytoplasm. Participates actively in the response to hyperosmotic and heat shock by preventing the aggregation of stress-denatured proteins and by disaggregating proteins, also in an autonomous, DnaK-independent fashion. Unfolded proteins bind initially to DnaJ; upon interaction with the DnaJ-bound protein, DnaK hydrolyzes its bound ATP, resulting in the formation of a stable complex. GrpE releases ADP from DnaK; ATP binding to DnaK triggers the release of the substrate protein, thus completing the reaction cycle. Several rounds of ATP-dependent interactions between DnaJ, DnaK and GrpE are required for fully efficient folding. Also involved, together with DnaK and GrpE, in the DNA replication of plasmids through activation of initiation proteins. This Methylobacterium radiotolerans (strain ATCC 27329 / DSM 1819 / JCM 2831 / NBRC 15690 / NCIMB 10815 / 0-1) protein is Chaperone protein DnaJ.